The following is a 428-amino-acid chain: Enolase (428 aa).

Gln-162 lines the (2R)-2-phosphoglycerate pocket. Glu-204 acts as the Proton donor in catalysis. Mg(2+) contacts are provided by Asp-241, Glu-288, and Asp-315. (2R)-2-phosphoglycerate is bound by residues Lys-340, Arg-369, Ser-370, and Lys-391. Lys-340 (proton acceptor) is an active-site residue.

It belongs to the enolase family. Requires Mg(2+) as cofactor.

Its subcellular location is the cytoplasm. It is found in the secreted. The protein localises to the cell surface. It carries out the reaction (2R)-2-phosphoglycerate = phosphoenolpyruvate + H2O. It functions in the pathway carbohydrate degradation; glycolysis; pyruvate from D-glyceraldehyde 3-phosphate: step 4/5. Its function is as follows. Catalyzes the reversible conversion of 2-phosphoglycerate (2-PG) into phosphoenolpyruvate (PEP). It is essential for the degradation of carbohydrates via glycolysis. This is Enolase from Azobacteroides pseudotrichonymphae genomovar. CFP2.